Reading from the N-terminus, the 128-residue chain is Large-conductance mechanosensitive channel (128 aa).

The Cytoplasmic portion of the chain corresponds to 1 to 16; it reads MNFIKEFREFAMRGNV. A helical membrane pass occupies residues 17–45; the sequence is VDMAVGVIIGSAFGKIVSSLVSDIFTPVL. The Periplasmic portion of the chain corresponds to 46–74; it reads GILTGGIDFKDMKFVLAQAQGDVPAVTLN. A helical transmembrane segment spans residues 75 to 94; the sequence is YGLFIQNVIDFIIIAFAIFM. The Cytoplasmic segment spans residues 95–128; the sequence is MIKVINKVRKPEEKKTAPKAETLLTEIRDLLKNK.

This sequence belongs to the MscL family. In terms of assembly, homopentamer.

The protein resides in the cell inner membrane. In terms of biological role, channel that opens in response to stretch forces in the membrane lipid bilayer. Forms a nonselective ion channel with a conductance of about 4 nanosiemens. May participate in the regulation of osmotic pressure changes within the cell. The chain is Large-conductance mechanosensitive channel from Haemophilus influenzae (strain ATCC 51907 / DSM 11121 / KW20 / Rd).